The primary structure comprises 372 residues: MSPGLDLEQSFSQTLEGFGLSDQAARLIWLPLPMLLVLVAAVVGVLVTVWLERKISAAVQQRIGPEYAGALGVLQPLADGLKLLVKEDIIPARADGLLFTLGPVLVVVPVILSWLIVPFGQNLLISNVGVGIFLWISLSSVQPIGLLMSGYASNNKYSLLGGLRAAAQSISYEIPLALAVLAVVMMSNSLSTVDIVSQQTGAGILSWNIWRQPVGFLIFWICALAECERLPFDLPEAEEELVAGYQTEYAGMKFALFYLGSYINLVLSALLVSVLYLGGWGFPVPVEWLAGWLGQSVDAPLVQVITGATGIVMTVLKAYLLVFIAILLRWTTPRVRIDQLLDLGWKFLLPLALVNLLVTAALKLAFPVAFGG.

Transmembrane regions (helical) follow at residues 27–47, 97–117, 128–148, 166–186, 204–224, 266–286, 308–328, and 347–367; these read LIWL…GVLV, LLFT…WLIV, VGVG…GLLM, AAQS…VVMM, ILSW…ICAL, VLSA…PVPV, ATGI…AILL, and FLLP…LAFP.

This sequence belongs to the complex I subunit 1 family. NDH-1 is composed of at least 11 different subunits.

It is found in the cellular thylakoid membrane. It catalyses the reaction a plastoquinone + NADH + (n+1) H(+)(in) = a plastoquinol + NAD(+) + n H(+)(out). It carries out the reaction a plastoquinone + NADPH + (n+1) H(+)(in) = a plastoquinol + NADP(+) + n H(+)(out). Functionally, NDH-1 shuttles electrons from an unknown electron donor, via FMN and iron-sulfur (Fe-S) centers, to quinones in the respiratory and/or the photosynthetic chain. The immediate electron acceptor for the enzyme in this species is believed to be plastoquinone. Couples the redox reaction to proton translocation, and thus conserves the redox energy in a proton gradient. This chain is NAD(P)H-quinone oxidoreductase subunit 1, found in Synechococcus sp. (strain WH7803).